A 309-amino-acid chain; its full sequence is Probable WRKY transcription factor 26 (309 aa).

The tract at residues 1–24 (MGSFDRQRAVPKFKTATPSPLPLS) is disordered. Positions 111–176 (SSNKTSDDGY…YKGSHNHPKP (66 aa)) form a DNA-binding region, WRKY 1. Positions 142, 147, 171, and 173 each coordinate Zn(2+). The interval 167 to 210 (YKGSHNHPKPQSTKRSSSTAIAAHQNSSNGDGKDIGEDETEAKR) is disordered. Residues 175-196 (KPQSTKRSSSTAIAAHQNSSNG) are compositionally biased toward polar residues. The segment covering 197–210 (DGKDIGEDETEAKR) has biased composition (basic and acidic residues). The WRKY 2 DNA-binding region spans 228–293 (SDIDILDDGY…YEGKHKHQIP (66 aa)). Residues Cys-259, Cys-264, His-288, and His-290 each contribute to the Zn(2+) site.

The protein belongs to the WRKY group I family. As to quaternary structure, interacts with VQ10.

It localises to the nucleus. Functionally, transcription factor. Interacts specifically with the W box (5'-(T)TGAC[CT]-3'), a frequently occurring elicitor-responsive cis-acting element. Functions with WRKY25 and WRKY33 as positive regulator of plant thermotolerance by partially participating in ethylene-response signal transduction pathway. This is Probable WRKY transcription factor 26 (WRKY26) from Arabidopsis thaliana (Mouse-ear cress).